A 252-amino-acid chain; its full sequence is MSRKPIIAGNWKMNKNPQEAKAFVEAVVSKLPSNDLVDVAVAAPAVDLVTTIEAAKDSVLKVAAQNCYFENSGAYTGETSPKVLADMGADYVVIGHSERRDYFHETDEDINKKAKAIFANGLTPIICCGESLETYEAGQAVAFVGAQVSAALEGLSAEQVASLVLAYEPIWAIGTGKSATQEDAQSMCKAVRDVVAADFGQEVADKVRVQYGGSVKPENIKEYMACPDVDGALVGGASLEADSFLALLDFVN.

Position 10–12 (10–12 (NWK)) interacts with substrate. Residue His-96 is the Electrophile of the active site. Glu-168 serves as the catalytic Proton acceptor. Substrate contacts are provided by residues Gly-174, Ser-214, and 235–236 (GG).

The protein belongs to the triosephosphate isomerase family. In terms of assembly, homodimer.

The protein resides in the cytoplasm. The catalysed reaction is D-glyceraldehyde 3-phosphate = dihydroxyacetone phosphate. It functions in the pathway carbohydrate biosynthesis; gluconeogenesis. The protein operates within carbohydrate degradation; glycolysis; D-glyceraldehyde 3-phosphate from glycerone phosphate: step 1/1. Functionally, involved in the gluconeogenesis. Catalyzes stereospecifically the conversion of dihydroxyacetone phosphate (DHAP) to D-glyceraldehyde-3-phosphate (G3P). The sequence is that of Triosephosphate isomerase from Streptococcus equi subsp. zooepidemicus (strain MGCS10565).